A 618-amino-acid polypeptide reads, in one-letter code: DNA mismatch repair protein MutL (618 aa).

A compositionally biased stretch (low complexity) spans glutamate 367–glycine 381. A disordered region spans residues glutamate 367–glycine 402. Over residues glycine 382–serine 392 the composition is skewed to gly residues.

The protein belongs to the DNA mismatch repair MutL/HexB family.

Functionally, this protein is involved in the repair of mismatches in DNA. It is required for dam-dependent methyl-directed DNA mismatch repair. May act as a 'molecular matchmaker', a protein that promotes the formation of a stable complex between two or more DNA-binding proteins in an ATP-dependent manner without itself being part of a final effector complex. The sequence is that of DNA mismatch repair protein MutL from Salmonella gallinarum (strain 287/91 / NCTC 13346).